Consider the following 271-residue polypeptide: Exosome complex component Rrp42 (271 aa).

Belongs to the RNase PH family. Rrp42 subfamily. In terms of assembly, component of the archaeal exosome complex. Forms a hexameric ring-like arrangement composed of 3 Rrp41-Rrp42 heterodimers. The hexameric ring associates with a trimer of Rrp4 and/or Csl4 subunits.

It is found in the cytoplasm. In terms of biological role, non-catalytic component of the exosome, which is a complex involved in RNA degradation. Contributes to the structuring of the Rrp41 active site. The protein is Exosome complex component Rrp42 of Methanothermobacter thermautotrophicus (strain ATCC 29096 / DSM 1053 / JCM 10044 / NBRC 100330 / Delta H) (Methanobacterium thermoautotrophicum).